Here is a 93-residue protein sequence, read N- to C-terminus: Small ribosomal subunit protein uS17 (93 aa).

The protein belongs to the universal ribosomal protein uS17 family. As to quaternary structure, part of the 30S ribosomal subunit.

In terms of biological role, one of the primary rRNA binding proteins, it binds specifically to the 5'-end of 16S ribosomal RNA. The protein is Small ribosomal subunit protein uS17 of Bordetella avium (strain 197N).